Consider the following 220-residue polypeptide: Flavin-dependent thymidylate synthase (220 aa).

Positions methionine 1–tyrosine 208 constitute a ThyX domain. FAD-binding positions include threonine 55, arginine 78 to arginine 80, and glutamate 86. Residues glutamine 75–arginine 78, glutamate 86–arginine 90, and arginine 147 contribute to the dUMP site. The short motif at arginine 78–serine 88 is the ThyX motif element. Residues asparagine 163 to arginine 165 and asparagine 169 contribute to the FAD site. Arginine 174 is a binding site for dUMP. The Involved in ionization of N3 of dUMP, leading to its activation role is filled by arginine 174.

This sequence belongs to the thymidylate synthase ThyX family. Homotetramer. FAD serves as cofactor.

It catalyses the reaction dUMP + (6R)-5,10-methylene-5,6,7,8-tetrahydrofolate + NADPH + H(+) = dTMP + (6S)-5,6,7,8-tetrahydrofolate + NADP(+). It participates in pyrimidine metabolism; dTTP biosynthesis. Catalyzes the reductive methylation of 2'-deoxyuridine-5'-monophosphate (dUMP) to 2'-deoxythymidine-5'-monophosphate (dTMP) while utilizing 5,10-methylenetetrahydrofolate (mTHF) as the methyl donor, and NADPH and FADH(2) as the reductant. This chain is Flavin-dependent thymidylate synthase, found in Thermotoga sp. (strain RQ2).